A 186-amino-acid polypeptide reads, in one-letter code: Peptidyl-tRNA hydrolase (186 aa).

Position 14 (Y14) interacts with tRNA. H19 serves as the catalytic Proton acceptor. TRNA contacts are provided by Y64, N66, and N112.

This sequence belongs to the PTH family. Monomer.

The protein localises to the cytoplasm. The enzyme catalyses an N-acyl-L-alpha-aminoacyl-tRNA + H2O = an N-acyl-L-amino acid + a tRNA + H(+). Hydrolyzes ribosome-free peptidyl-tRNAs (with 1 or more amino acids incorporated), which drop off the ribosome during protein synthesis, or as a result of ribosome stalling. In terms of biological role, catalyzes the release of premature peptidyl moieties from peptidyl-tRNA molecules trapped in stalled 50S ribosomal subunits, and thus maintains levels of free tRNAs and 50S ribosomes. This is Peptidyl-tRNA hydrolase from Geobacillus kaustophilus (strain HTA426).